A 312-amino-acid chain; its full sequence is D-alanine--D-alanine ligase (312 aa).

One can recognise an ATP-grasp domain in the interval 102-307; the sequence is KKIFKMEGIP…FPELTDRLIK (206 aa). 136 to 191 provides a ligand contact to ATP; that stretch reads IKEVGVPAVVKANTQGSTIGITFVHVKEKMAEAIESALKYDQDVLVEQFVAGTEVT. Mg(2+) contacts are provided by D262, E274, and N276.

This sequence belongs to the D-alanine--D-alanine ligase family. The cofactor is Mg(2+). Requires Mn(2+) as cofactor.

The protein resides in the cytoplasm. The enzyme catalyses 2 D-alanine + ATP = D-alanyl-D-alanine + ADP + phosphate + H(+). Its pathway is cell wall biogenesis; peptidoglycan biosynthesis. Its function is as follows. Cell wall formation. The chain is D-alanine--D-alanine ligase from Desulforamulus reducens (strain ATCC BAA-1160 / DSM 100696 / MI-1) (Desulfotomaculum reducens).